The primary structure comprises 29 residues: Cycloviolacin-H2 (29 aa).

The segment at residues 1–29 (SAIACGESCVYIPCFIPGCSCRNRVCYLN) is a cross-link (cyclopeptide (Ser-Asn)). 3 disulfides stabilise this stretch: Cys5–Cys19, Cys9–Cys21, and Cys14–Cys26.

In terms of processing, this is a cyclic peptide.

Probably participates in a plant defense mechanism. The chain is Cycloviolacin-H2 from Viola hederacea (Australian violet).